A 102-amino-acid polypeptide reads, in one-letter code: Large ribosomal subunit protein uL24 (102 aa).

This sequence belongs to the universal ribosomal protein uL24 family. As to quaternary structure, part of the 50S ribosomal subunit.

Functionally, one of two assembly initiator proteins, it binds directly to the 5'-end of the 23S rRNA, where it nucleates assembly of the 50S subunit. One of the proteins that surrounds the polypeptide exit tunnel on the outside of the subunit. The polypeptide is Large ribosomal subunit protein uL24 (Rhizobium leguminosarum bv. trifolii (strain WSM2304)).